Consider the following 719-residue polypeptide: MFVGVARHSGSQDEVSRGVEPLEAARAQPAKDRRAKGTPKSSKPGKKHRYLRLLPEALIRFGGFRKRKKAKSSVSKKPGEVDDSLEQPCGLGCLVSTCCECCNNIRCFMIFYCILLICQGVVFGLIDVSIGDFQKEYQLKTIEKLALEKSYDISSGLVAIFIAFYGDRKKVIWFVASSFLIGLGSLLCAFPSINEENKQSKVGIEDICEEIKVVSGCQSSGISFQSKYLSFFILGQTVQGIAGMPLYILGITFIDENVATHSAGIYLGIAECTSMIGYALGYVLGAPLVKVPENTTSATNTTVNNGSPEWLWTWWINFLFAAVVAWCTLIPLSCFPNNMPGSTRIKARKRKQLHFFDSRLKDLKLGTNIKDLCAALWILMKNPVLICLALSKATEYLVIIGASEFLPIYLENQFILTPTVATTLAGLVLIPGGALGQLLGGVIVSTLEMSCKALMRFIMVTSVISLILLVFIIFVRCNPVQFAGINEDYDGTGKLGNLTAPCNEKCRCSSSIYSSICGRDDIEYFSPCFAGCTYSKAQNQKKMYYNCSCIKEGLITADAEGDFIDARPGKCDAKCYKLPLFIAFIFSTLIFSGFSGVPIVLAMTRVVPDKLRSLALGVSYVILRIFGTIPGPSIFKMSGETSCILRDVNKCGHTGRCWIYNKTKMAFLLVGICFLCKLCTIIFTTIAFFIYKRRLNENTDFPDVTVKNPKVKKKEETDL.

Residues 1-46 (MFVGVARHSGSQDEVSRGVEPLEAARAQPAKDRRAKGTPKSSKPGK) form a disordered region. At 1 to 106 (MFVGVARHSG…TCCECCNNIR (106 aa)) the chain is on the cytoplasmic side. A compositionally biased stretch (basic residues) spans 33–46 (RRAKGTPKSSKPGK). The helical transmembrane segment at 107–126 (CFMIFYCILLICQGVVFGLI) threads the bilayer. Topologically, residues 127–145 (DVSIGDFQKEYQLKTIEKL) are extracellular. The helical transmembrane segment at 146–166 (ALEKSYDISSGLVAIFIAFYG) threads the bilayer. Residues 167-171 (DRKKV) lie on the Cytoplasmic side of the membrane. The chain crosses the membrane as a helical span at residues 172–196 (IWFVASSFLIGLGSLLCAFPSINEE). The Extracellular segment spans residues 197-223 (NKQSKVGIEDICEEIKVVSGCQSSGIS). The chain crosses the membrane as a helical span at residues 224–254 (FQSKYLSFFILGQTVQGIAGMPLYILGITFI). The Cytoplasmic segment spans residues 255 to 274 (DENVATHSAGIYLGIAECTS). The chain crosses the membrane as a helical span at residues 275 to 295 (MIGYALGYVLGAPLVKVPENT). Over 296-311 (TSATNTTVNNGSPEWL) the chain is Extracellular. An N-linked (GlcNAc...) asparagine glycan is attached at N300. A helical membrane pass occupies residues 312–336 (WTWWINFLFAAVVAWCTLIPLSCFP). Over 337–378 (NNMPGSTRIKARKRKQLHFFDSRLKDLKLGTNIKDLCAALWI) the chain is Cytoplasmic. The helical transmembrane segment at 379-400 (LMKNPVLICLALSKATEYLVII) threads the bilayer. Residues 401-420 (GASEFLPIYLENQFILTPTV) lie on the Extracellular side of the membrane. A helical transmembrane segment spans residues 421–444 (ATTLAGLVLIPGGALGQLLGGVIV). The Cytoplasmic segment spans residues 445–448 (STLE). Residues 449–472 (MSCKALMRFIMVTSVISLILLVFI) traverse the membrane as a helical segment. Residues 473 to 581 (IFVRCNPVQF…DAKCYKLPLF (109 aa)) are Extracellular-facing. A Kazal-like domain is found at 496 to 551 (GNLTAPCNEKCRCSSSIYSSICGRDDIEYFSPCFAGCTYSKAQNQKKMYYNCSCIK). N-linked (GlcNAc...) asparagine glycosylation occurs at N497. 3 disulfides stabilise this stretch: C502–C532, C508–C528, and C517–C549. N-linked (GlcNAc...) asparagine glycosylation is present at N546. The chain crosses the membrane as a helical span at residues 582–604 (IAFIFSTLIFSGFSGVPIVLAMT). The Cytoplasmic portion of the chain corresponds to 605-613 (RVVPDKLRS). The chain crosses the membrane as a helical span at residues 614–639 (LALGVSYVILRIFGTIPGPSIFKMSG). The Extracellular portion of the chain corresponds to 640–673 (ETSCILRDVNKCGHTGRCWIYNKTKMAFLLVGIC). The N-linked (GlcNAc...) asparagine glycan is linked to N661. A helical transmembrane segment spans residues 674–691 (FLCKLCTIIFTTIAFFIY). The Cytoplasmic segment spans residues 692–719 (KRRLNENTDFPDVTVKNPKVKKKEETDL).

Belongs to the organo anion transporter (TC 2.A.60) family. In terms of tissue distribution, strongly expressed in testis. Weakly expressed in spleen, brain, fetal brain and placenta. Detected in lung tumors.

It localises to the cell membrane. The polypeptide is Solute carrier organic anion transporter family member 6A1 (SLCO6A1) (Homo sapiens (Human)).